The following is a 176-amino-acid chain: Inner membrane-spanning protein YciB (176 aa).

5 helical membrane passes run 23 to 43 (MIAAAAVALVAGVVQAAFLYW), 50 to 70 (TMQWVGLVLIVVFGGATIVLG), 74 to 94 (FIMWKPTVLFWCGALFLLGSH), 119 to 139 (LTYMWVGFLIFMGIANWFVFT), and 150 to 170 (MFGSTALMLFFFIIQGIYLST).

The protein belongs to the YciB family.

It is found in the cell inner membrane. In terms of biological role, plays a role in cell envelope biogenesis, maintenance of cell envelope integrity and membrane homeostasis. This chain is Inner membrane-spanning protein YciB, found in Neisseria gonorrhoeae (strain ATCC 700825 / FA 1090).